Reading from the N-terminus, the 91-residue chain is Small ribosomal subunit protein bS16 (91 aa).

This sequence belongs to the bacterial ribosomal protein bS16 family.

This is Small ribosomal subunit protein bS16 from Phytoplasma australiense.